A 324-amino-acid chain; its full sequence is MLKASLKSIASYIPEKILSNADLEKMVDTTDEWITRRTGIKERRIASENENTSDLGTKAALKAIKRANLKPEDIDAILVATLSPDYFTMPSTACKIASNLGLVNISAFDISAACSGFIYLLEQAKALVESGLKKNVLIIGAEKTSSIMDYNDRSICILFGDGAGAGVVSLDNENHILDVHTASNGNYGDLLMTQRSQKSNLCQTLSMQMKGNEVFKIAVNTLSNDVVEILAKNNILAQEIDLFIPHQANLRIIKAVQEKLNLSDEKCVITVQKYGNTSAASIPMAMNDAYEEGRLKKGDLILLDAFGGGFTWGSALLKFGGENF.

Catalysis depends on residues Cys114 and His246. The segment at 247–251 is ACP-binding; it reads QANLR. Asn276 is a catalytic residue.

The protein belongs to the thiolase-like superfamily. FabH family. Homodimer.

It is found in the cytoplasm. The catalysed reaction is malonyl-[ACP] + acetyl-CoA + H(+) = 3-oxobutanoyl-[ACP] + CO2 + CoA. It participates in lipid metabolism; fatty acid biosynthesis. Its function is as follows. Catalyzes the condensation reaction of fatty acid synthesis by the addition to an acyl acceptor of two carbons from malonyl-ACP. Catalyzes the first condensation reaction which initiates fatty acid synthesis and may therefore play a role in governing the total rate of fatty acid production. Possesses both acetoacetyl-ACP synthase and acetyl transacylase activities. Its substrate specificity determines the biosynthesis of branched-chain and/or straight-chain of fatty acids. This Campylobacter jejuni subsp. jejuni serotype O:6 (strain 81116 / NCTC 11828) protein is Beta-ketoacyl-[acyl-carrier-protein] synthase III.